The following is a 760-amino-acid chain: MTSPENPDLPDADDAYVDSGPGTQPASLEDLDMDSASTMRPMATQAVYRPEFDDTDGTSRGTVVTEAYDQVTMATRALSPMRRLGGGLVEIPRVPERDPLTALMTNPVVAESKRFCWNCGKPVGRSTPDGRALSEGWCPHCGSPYSFLPQLSPGDIVADQYEIKGCIAHGGLGWVYLAFDKNVNDRPVVLKGLVHSGDAEAQAIAMAERQFLAEVTHPGIVKIYNFVEHEDKHGNPVGYIVMEYVGGTSLKQARGAKLPVAEAIGYMLEILPALGYLHSIGLAYNDLKPENIMITEEQLKLIDLGAVSRLNSYGYLYGTPGYQAPEIVRTGPTVATDIYTVGRTLAALTLSLRTRRGRYVDGLPSDDPVLETYDSYHRLLRRAIDPDPRRRFTSAEEMSSQLLGVLREVVATDTGVPRPGLSTVFSPSRSTFGVDLLVAHTDVYVDGQVHSEKLTAQEIVRALPVPLVDRTDVGAPMLVASVLSEPVHTLDQLRAARHGALDTEGIDLNESVELPLMEVRALLDLGDVAKATRKLEDLAARVGWRWRLVWFKAVSEMLSADYDSATKHFTEVLDTLPGELAPKLALAATAELAGTADELKFYKTVWSTDNGVISAGFGLARAQSVAGERDMAVQTLDEVPPTSRHFTTARLTSAVTLLSGRSTSEITEQHIRDAARRVEALPDSEPRVLQIRALVLGTALDWLADNTASSNHILGFPFTEHGLKLGVEASLRALARIAPTQSHRYALVDLANSVRPMSTF.

The interval 1–31 (MTSPENPDLPDADDAYVDSGPGTQPASLEDL) is disordered. The Protein kinase domain occupies 161–403 (YEIKGCIAHG…SAEEMSSQLL (243 aa)). ATP contacts are provided by residues 167-175 (IAHGGLGWV) and Lys191. Asp286 serves as the catalytic Proton acceptor.

Belongs to the protein kinase superfamily. Ser/Thr protein kinase family. In terms of assembly, interacts with GarA in vitro.

The enzyme catalyses L-seryl-[protein] + ATP = O-phospho-L-seryl-[protein] + ADP + H(+). The catalysed reaction is L-threonyl-[protein] + ATP = O-phospho-L-threonyl-[protein] + ADP + H(+). The protein is Serine/threonine-protein kinase PknG (pknG) of Mycolicibacterium smegmatis (strain ATCC 700084 / mc(2)155) (Mycobacterium smegmatis).